A 335-amino-acid polypeptide reads, in one-letter code: NADH-quinone oxidoreductase subunit H (335 aa).

Helical transmembrane passes span 11-31 (VILT…CGAL), 81-101 (MIFT…FVVI), 114-134 (IGLL…LFAG), 154-174 (VSYE…VGSF), 187-207 (LWFI…GVAV), 238-258 (FFVG…TLFF), 270-290 (QVPF…FILL), and 307-327 (WKFC…VVLY).

The protein belongs to the complex I subunit 1 family. In terms of assembly, NDH-1 is composed of 13 different subunits. Subunits NuoA, H, J, K, L, M, N constitute the membrane sector of the complex.

The protein localises to the cell inner membrane. The catalysed reaction is a quinone + NADH + 5 H(+)(in) = a quinol + NAD(+) + 4 H(+)(out). Its function is as follows. NDH-1 shuttles electrons from NADH, via FMN and iron-sulfur (Fe-S) centers, to quinones in the respiratory chain. The immediate electron acceptor for the enzyme in this species is believed to be ubiquinone. Couples the redox reaction to proton translocation (for every two electrons transferred, four hydrogen ions are translocated across the cytoplasmic membrane), and thus conserves the redox energy in a proton gradient. This subunit may bind ubiquinone. In Pseudomonas entomophila (strain L48), this protein is NADH-quinone oxidoreductase subunit H.